Reading from the N-terminus, the 325-residue chain is Beta-ketoacyl-[acyl-carrier-protein] synthase III (325 aa).

Catalysis depends on residues Cys-116 and His-252. An ACP-binding region spans residues 253–257 (QANLR). The active site involves Asn-282.

The protein belongs to the thiolase-like superfamily. FabH family. As to quaternary structure, homodimer.

It is found in the cytoplasm. It catalyses the reaction malonyl-[ACP] + acetyl-CoA + H(+) = 3-oxobutanoyl-[ACP] + CO2 + CoA. Its pathway is lipid metabolism; fatty acid biosynthesis. Catalyzes the condensation reaction of fatty acid synthesis by the addition to an acyl acceptor of two carbons from malonyl-ACP. Catalyzes the first condensation reaction which initiates fatty acid synthesis and may therefore play a role in governing the total rate of fatty acid production. Possesses both acetoacetyl-ACP synthase and acetyl transacylase activities. Its substrate specificity determines the biosynthesis of branched-chain and/or straight-chain of fatty acids. The chain is Beta-ketoacyl-[acyl-carrier-protein] synthase III from Xanthomonas euvesicatoria pv. vesicatoria (strain 85-10) (Xanthomonas campestris pv. vesicatoria).